The sequence spans 219 residues: RPA-interacting protein (219 aa).

Ser18 is modified (phosphoserine). The segment at 137-212 (CPVCIKYNLR…PSLLMNCLTC (76 aa)) adopts an RIP-type zinc-finger fold. The segment at 164 to 180 (STDLTEQKLRACLEENV) is mediates nuclear export.

In terms of assembly, interacts with the RPA1 subunit of RPA complex. Sumoylated; required for localization in the nuclear PML body and transport of RPA complex in PML body. Upon UV irradiation and during S phase, it is desumoylated, releasing RPA complex that is translocated to sites of DNA damage. Sumoylation takes place at different Lys residues.

Its subcellular location is the nucleus. Functionally, mediates the import of RPA complex into the nucleus, possibly via some interaction with importin beta. Sumoylation mediates the localization of RPA complex into the PML body of the nucleus, thereby participating in RPA function in DNA metabolism. This Mus musculus (Mouse) protein is RPA-interacting protein (Rpain).